Consider the following 141-residue polypeptide: Transcription antitermination protein NusB (141 aa).

Belongs to the NusB family.

In terms of biological role, involved in transcription antitermination. Required for transcription of ribosomal RNA (rRNA) genes. Binds specifically to the boxA antiterminator sequence of the ribosomal RNA (rrn) operons. The protein is Transcription antitermination protein NusB of Neisseria gonorrhoeae (strain ATCC 700825 / FA 1090).